The sequence spans 347 residues: Probable dual-specificity RNA methyltransferase RlmN (347 aa).

The active-site Proton acceptor is the Glu93. Positions Thr99–Asp333 constitute a Radical SAM core domain. A disulfide bond links Cys106 and Cys338. [4Fe-4S] cluster-binding residues include Cys113, Cys117, and Cys120. S-adenosyl-L-methionine is bound by residues Gly160–Glu161, Ser190, Ser219–His221, and Asn295. Cys338 serves as the catalytic S-methylcysteine intermediate.

Belongs to the radical SAM superfamily. RlmN family. The cofactor is [4Fe-4S] cluster.

It is found in the cytoplasm. The catalysed reaction is adenosine(2503) in 23S rRNA + 2 reduced [2Fe-2S]-[ferredoxin] + 2 S-adenosyl-L-methionine = 2-methyladenosine(2503) in 23S rRNA + 5'-deoxyadenosine + L-methionine + 2 oxidized [2Fe-2S]-[ferredoxin] + S-adenosyl-L-homocysteine. The enzyme catalyses adenosine(37) in tRNA + 2 reduced [2Fe-2S]-[ferredoxin] + 2 S-adenosyl-L-methionine = 2-methyladenosine(37) in tRNA + 5'-deoxyadenosine + L-methionine + 2 oxidized [2Fe-2S]-[ferredoxin] + S-adenosyl-L-homocysteine. Functionally, specifically methylates position 2 of adenine 2503 in 23S rRNA and position 2 of adenine 37 in tRNAs. This Prochlorococcus marinus (strain MIT 9301) protein is Probable dual-specificity RNA methyltransferase RlmN.